A 102-amino-acid polypeptide reads, in one-letter code: Large ribosomal subunit protein bL21 (102 aa).

The protein belongs to the bacterial ribosomal protein bL21 family. As to quaternary structure, part of the 50S ribosomal subunit. Contacts protein L20.

In terms of biological role, this protein binds to 23S rRNA in the presence of protein L20. This is Large ribosomal subunit protein bL21 from Onion yellows phytoplasma (strain OY-M).